Consider the following 626-residue polypeptide: Phosphomethylpyrimidine synthase (626 aa).

Residues 92–106 are compositionally biased toward basic and acidic residues; it reads AREVKPEDNGLKGPD. Residues 92 to 117 are disordered; it reads AREVKPEDNGLKGPDRSAGVPPFPNV. Substrate is bound by residues Asn219, Met248, Tyr277, His313, 333 to 335, 374 to 377, and Glu413; these read SRG and DGLR. His417 is a binding site for Zn(2+). Position 440 (Tyr440) interacts with substrate. His481 lines the Zn(2+) pocket. [4Fe-4S] cluster is bound by residues Cys561, Cys564, and Cys569.

It belongs to the ThiC family. Homodimer. [4Fe-4S] cluster is required as a cofactor.

The catalysed reaction is 5-amino-1-(5-phospho-beta-D-ribosyl)imidazole + S-adenosyl-L-methionine = 4-amino-2-methyl-5-(phosphooxymethyl)pyrimidine + CO + 5'-deoxyadenosine + formate + L-methionine + 3 H(+). It functions in the pathway cofactor biosynthesis; thiamine diphosphate biosynthesis. In terms of biological role, catalyzes the synthesis of the hydroxymethylpyrimidine phosphate (HMP-P) moiety of thiamine from aminoimidazole ribotide (AIR) in a radical S-adenosyl-L-methionine (SAM)-dependent reaction. In Novosphingobium aromaticivorans (strain ATCC 700278 / DSM 12444 / CCUG 56034 / CIP 105152 / NBRC 16084 / F199), this protein is Phosphomethylpyrimidine synthase.